We begin with the raw amino-acid sequence, 422 residues long: Solanesyl diphosphate synthase 3, chloroplastic/mitochondrial (422 aa).

The transit peptide at 1–32 directs the protein to the chloroplast and mitochondrion; it reads MLFTRSVARISSKFLRNRSFYGSSQSLASHRF. 3 residues coordinate isopentenyl diphosphate: lysine 125, arginine 128, and histidine 174. The Mg(2+) site is built by aspartate 181 and aspartate 185. Arginine 190 contacts an all-trans-polyprenyl diphosphate. Arginine 191 contributes to the isopentenyl diphosphate binding site. 4 residues coordinate an all-trans-polyprenyl diphosphate: lysine 267, threonine 268, glutamine 305, and lysine 322.

This sequence belongs to the FPP/GGPP synthase family. As to quaternary structure, homodimer. The cofactor is Mg(2+). As to expression, ubiquitous. Highest expression in seeds and shoot apical meristem.

The protein localises to the plastid. It localises to the chloroplast. The protein resides in the mitochondrion. The catalysed reaction is 5 isopentenyl diphosphate + (2E,6E,10E)-geranylgeranyl diphosphate = all-trans-nonaprenyl diphosphate + 5 diphosphate. Its function is as follows. May be involved in the supply of solanesyl diphosphate for ubiquinone-9 (UQ-9) biosynthesis in mitochondria. Synthesizes C25 to C45 medium / long-chain products depending on the type of substrate available. Can use geranyl diphosphate, farnesyl diphosphate or geranylgeranyl diphosphate as substrates, but not dimethylallyl diphosphate. This Arabidopsis thaliana (Mouse-ear cress) protein is Solanesyl diphosphate synthase 3, chloroplastic/mitochondrial.